Reading from the N-terminus, the 474-residue chain is Bifunctional protein HldE (474 aa).

The interval M1–E318 is ribokinase. N194–E197 is a binding site for ATP. Residue D263 is part of the active site. Residues F343–G474 are cytidylyltransferase.

The protein in the N-terminal section; belongs to the carbohydrate kinase PfkB family. This sequence in the C-terminal section; belongs to the cytidylyltransferase family. As to quaternary structure, homodimer.

The catalysed reaction is D-glycero-beta-D-manno-heptose 7-phosphate + ATP = D-glycero-beta-D-manno-heptose 1,7-bisphosphate + ADP + H(+). It catalyses the reaction D-glycero-beta-D-manno-heptose 1-phosphate + ATP + H(+) = ADP-D-glycero-beta-D-manno-heptose + diphosphate. It functions in the pathway nucleotide-sugar biosynthesis; ADP-L-glycero-beta-D-manno-heptose biosynthesis; ADP-L-glycero-beta-D-manno-heptose from D-glycero-beta-D-manno-heptose 7-phosphate: step 1/4. It participates in nucleotide-sugar biosynthesis; ADP-L-glycero-beta-D-manno-heptose biosynthesis; ADP-L-glycero-beta-D-manno-heptose from D-glycero-beta-D-manno-heptose 7-phosphate: step 3/4. In terms of biological role, catalyzes the phosphorylation of D-glycero-D-manno-heptose 7-phosphate at the C-1 position to selectively form D-glycero-beta-D-manno-heptose-1,7-bisphosphate. Functionally, catalyzes the ADP transfer from ATP to D-glycero-beta-D-manno-heptose 1-phosphate, yielding ADP-D-glycero-beta-D-manno-heptose. The polypeptide is Bifunctional protein HldE (Pseudomonas aeruginosa (strain UCBPP-PA14)).